Reading from the N-terminus, the 351-residue chain is MNGTEGPFFYIPMSNATGLVRSPYDYPQYYLVPPWGYACLAAYMFLLILTGFPVNFLTLYVTIEHKKLRSPLNYILLNLAVADLFMVIGGFTTTMWTSLNGYFVFGRMGCNIEGFFATLGGEIALWSLVVLSMERWIVVCKPISNFRFGENHAVMGVAFSWFMAAACAVPPLVGWSRYIPEGMQCSCGIDYYTRAEGFNNESFVIYMFVVHFTCPLTIITFCYGRLVCTVKEAAAQQQESETTQRAEREVTRMVIIMFVAFLACWVPYASVAWYIFTHQGSEFGPVFMTIPAFFAKSSAVYNPVIYICLNKQFRHCMITTLCCGKNPFEEEEGSTTASKTEASSVCSVSPA.

The Extracellular segment spans residues 1 to 36 (MNGTEGPFFYIPMSNATGLVRSPYDYPQYYLVPPWG). N-linked (GlcNAc...) asparagine glycans are attached at residues Asn-2 and Asn-15. The chain crosses the membrane as a helical span at residues 37-61 (YACLAAYMFLLILTGFPVNFLTLYV). The Cytoplasmic portion of the chain corresponds to 62 to 73 (TIEHKKLRSPLN). Residues 74 to 96 (YILLNLAVADLFMVIGGFTTTMW) form a helical membrane-spanning segment. Topologically, residues 97–110 (TSLNGYFVFGRMGC) are extracellular. The cysteines at positions 110 and 187 are disulfide-linked. Residues 111–133 (NIEGFFATLGGEIALWSLVVLSM) traverse the membrane as a helical segment. A 'Ionic lock' involved in activated form stabilization motif is present at residues 134–136 (ERW). Residues 134 to 152 (ERWIVVCKPISNFRFGENH) are Cytoplasmic-facing. Residues 153–173 (AVMGVAFSWFMAAACAVPPLV) traverse the membrane as a helical segment. Over 174–202 (GWSRYIPEGMQCSCGIDYYTRAEGFNNES) the chain is Extracellular. An N-linked (GlcNAc...) asparagine glycan is attached at Asn-200. The chain crosses the membrane as a helical span at residues 203–224 (FVIYMFVVHFTCPLTIITFCYG). At 225–252 (RLVCTVKEAAAQQQESETTQRAEREVTR) the chain is on the cytoplasmic side. A helical membrane pass occupies residues 253 to 274 (MVIIMFVAFLACWVPYASVAWY). At 275 to 286 (IFTHQGSEFGPV) the chain is on the extracellular side. Residues 287-308 (FMTIPAFFAKSSAVYNPVIYIC) form a helical membrane-spanning segment. The residue at position 296 (Lys-296) is an N6-(retinylidene)lysine. Residues 309–351 (LNKQFRHCMITTLCCGKNPFEEEEGSTTASKTEASSVCSVSPA) lie on the Cytoplasmic side of the membrane. S-palmitoyl cysteine attachment occurs at residues Cys-322 and Cys-323. A disordered region spans residues 330–351 (EEEGSTTASKTEASSVCSVSPA). Over residues 334-351 (STTASKTEASSVCSVSPA) the composition is skewed to polar residues.

Belongs to the G-protein coupled receptor 1 family. Opsin subfamily. Post-translationally, phosphorylated on some or all of the serine and threonine residues present in the C-terminal region. In terms of processing, contains one covalently linked retinal chromophore.

The protein resides in the membrane. It localises to the cell projection. It is found in the cilium. Its subcellular location is the photoreceptor outer segment. In terms of biological role, photoreceptor required for image-forming vision at low light intensity. While most salt water fish species use retinal as chromophore, most freshwater fish use 3-dehydroretinal, or a mixture of retinal and 3-dehydroretinal. Light-induced isomerization of 11-cis to all-trans retinal triggers a conformational change that activates signaling via G-proteins. Subsequent receptor phosphorylation mediates displacement of the bound G-protein alpha subunit by arrestin and terminates signaling. This chain is Rhodopsin (rho), found in Sardina pilchardus (European pilchard).